We begin with the raw amino-acid sequence, 159 residues long: uncharacterized protein (159 aa).

A run of 3 helical transmembrane segments spans residues 10-30 (FLSM…SLFF), 52-72 (MLIL…VILL), and 96-116 (LTLI…PFVT).

The protein localises to the membrane. This is an uncharacterized protein from Escherichia coli (strain K12).